Reading from the N-terminus, the 438-residue chain is Argininosuccinate lyase (438 aa).

The protein belongs to the lyase 1 family. Argininosuccinate lyase subfamily.

The protein resides in the cytoplasm. The enzyme catalyses 2-(N(omega)-L-arginino)succinate = fumarate + L-arginine. It participates in amino-acid biosynthesis; L-arginine biosynthesis; L-arginine from L-ornithine and carbamoyl phosphate: step 3/3. The polypeptide is Argininosuccinate lyase (Clostridioides difficile (strain 630) (Peptoclostridium difficile)).